The following is a 177-amino-acid chain: Large ribosomal subunit protein uL6 (177 aa).

This sequence belongs to the universal ribosomal protein uL6 family. As to quaternary structure, part of the 50S ribosomal subunit.

Its function is as follows. This protein binds to the 23S rRNA, and is important in its secondary structure. It is located near the subunit interface in the base of the L7/L12 stalk, and near the tRNA binding site of the peptidyltransferase center. In Pseudomonas fluorescens (strain SBW25), this protein is Large ribosomal subunit protein uL6.